Here is a 566-residue protein sequence, read N- to C-terminus: Cytoplasmic polyadenylation element-binding protein 2 (566 aa).

2 disordered regions span residues 17–46 and 64–98; these read FWGN…SVEG and LERL…IQEQ. Residues 87-98 show a composition bias toward acidic residues; it reads DSEEEEEDIQEQ. One can recognise an RRM domain in the interval 430–512; sequence MVAFIGGVPR…KRVEIKPYFF (83 aa).

Cytoplasmic polyadenylation element binding protein that binds to and regulates the translation of specific mRNAs. This chain is Cytoplasmic polyadenylation element-binding protein 2 (cpb-2), found in Caenorhabditis briggsae.